We begin with the raw amino-acid sequence, 194 residues long: Fimbrial protein 987P (194 aa).

Positions 1–23 (MRMKKSALTLAVLSSLFSGYSLA) are cleaved as a signal peptide. Cysteines 46 and 85 form a disulfide.

Belongs to the fimbrial protein family.

It localises to the fimbrium. This Escherichia coli protein is Fimbrial protein 987P (fasA).